A 591-amino-acid chain; its full sequence is MAHQSWSVLDAPNPTYLWTQLLVEELVRNGVHTFFVAPGSRSTPLTVAIARHPEAESVLHVDERGAAFAALGVGRAARGPAAWVTTSGTAVANGLPAAVEASVDGVPMLLLTADRPPELRDTGANQTIDQVKIFGDYVRWQADVPPPSDEVDPAYVLTTADQALHQTLRAPAGPVHVNCMFRKPLEPVETEASVAVPTAVDAWARGTEPYTHYPTPAPSPPGPEVDALAETVRGTEHGLVVAGRLDSAAAADATRRLATHLGWPLIPDLTSRLRRGGREQPEQVPYGDLVLTSAAFREGHPPRAVLQVGGRFASKRLRLFLRDSAPEVWAVVRPDPSRIDPDHRVTHHVEAAVPAAVDALVARLEEGPRGTTWRDDWAGASERVGAVVQAHVQESDALTDPLVAALLTEEMPSEHALVAASSMPVRDLNRHAAPGGTGGPAFANRGASGIDGTVATAAGIAEGRDGPVTLLIGDLALQHDLNGLALLQDRPVVAIVVNNDGGGIFHFLPIRKHDEFDPYFTTPHGHDFEHAAALFDLPYHRPDSPSALRSAYAQACRSGESALIEVRTDRATNRQVHDRLEASVERAVEEG.

It belongs to the TPP enzyme family. MenD subfamily. In terms of assembly, homodimer. The cofactor is Mg(2+). It depends on Mn(2+) as a cofactor. Requires thiamine diphosphate as cofactor.

It catalyses the reaction isochorismate + 2-oxoglutarate + H(+) = 5-enolpyruvoyl-6-hydroxy-2-succinyl-cyclohex-3-ene-1-carboxylate + CO2. Its pathway is quinol/quinone metabolism; 1,4-dihydroxy-2-naphthoate biosynthesis; 1,4-dihydroxy-2-naphthoate from chorismate: step 2/7. The protein operates within quinol/quinone metabolism; menaquinone biosynthesis. In terms of biological role, catalyzes the thiamine diphosphate-dependent decarboxylation of 2-oxoglutarate and the subsequent addition of the resulting succinic semialdehyde-thiamine pyrophosphate anion to isochorismate to yield 2-succinyl-5-enolpyruvyl-6-hydroxy-3-cyclohexene-1-carboxylate (SEPHCHC). This is 2-succinyl-5-enolpyruvyl-6-hydroxy-3-cyclohexene-1-carboxylate synthase from Salinibacter ruber (strain DSM 13855 / M31).